A 219-amino-acid polypeptide reads, in one-letter code: Mucosal pentraxin (219 aa).

Residues 1–19 form the signal peptide; it reads MEKLIVGILFLSVLSGSVA. One can recognise a Pentraxin (PTX) domain in the interval 24–219; sequence KGKAFIFPQE…YVVIKPKLWP (196 aa). An N-linked (GlcNAc...) asparagine glycan is attached at Asn51. An intrachain disulfide couples Cys55 to Cys114. 6 residues coordinate Ca(2+): Asp77, Asn78, Glu155, Gln156, Asp157, and Gln167.

It belongs to the pentraxin family. In terms of assembly, homopentamer. Pentraxin (or pentaxin) have a discoid arrangement of 5 non-covalently bound subunits. It depends on Ca(2+) as a cofactor. As to expression, expressed in colon.

It is found in the secreted. The sequence is that of Mucosal pentraxin (Mptx1) from Mus musculus (Mouse).